Reading from the N-terminus, the 451-residue chain is Bifunctional protein GlmU (451 aa).

A pyrophosphorylase region spans residues 1 to 229 (MQRHAIILAA…FDEIIGVNDR (229 aa)). Residues 8 to 11 (LAAG), lysine 22, glutamine 72, and 77 to 78 (GT) each bind UDP-N-acetyl-alpha-D-glucosamine. Residue aspartate 102 coordinates Mg(2+). UDP-N-acetyl-alpha-D-glucosamine contacts are provided by glycine 139, glutamate 154, and asparagine 227. Asparagine 227 is a Mg(2+) binding site. Positions 230 to 250 (LMLSEAEKALQQRINRYHMEN) are linker. An N-acetyltransferase region spans residues 251-451 (GVTIIDPSST…QVNKEGYLKK (201 aa)). Positions 332 and 350 each coordinate UDP-N-acetyl-alpha-D-glucosamine. Catalysis depends on histidine 362, which acts as the Proton acceptor. UDP-N-acetyl-alpha-D-glucosamine contacts are provided by tyrosine 365 and asparagine 376. Residues 385–386 (NY), alanine 422, and arginine 439 each bind acetyl-CoA.

This sequence in the N-terminal section; belongs to the N-acetylglucosamine-1-phosphate uridyltransferase family. It in the C-terminal section; belongs to the transferase hexapeptide repeat family. As to quaternary structure, homotrimer. Requires Mg(2+) as cofactor.

Its subcellular location is the cytoplasm. The enzyme catalyses alpha-D-glucosamine 1-phosphate + acetyl-CoA = N-acetyl-alpha-D-glucosamine 1-phosphate + CoA + H(+). It catalyses the reaction N-acetyl-alpha-D-glucosamine 1-phosphate + UTP + H(+) = UDP-N-acetyl-alpha-D-glucosamine + diphosphate. Its pathway is nucleotide-sugar biosynthesis; UDP-N-acetyl-alpha-D-glucosamine biosynthesis; N-acetyl-alpha-D-glucosamine 1-phosphate from alpha-D-glucosamine 6-phosphate (route II): step 2/2. It functions in the pathway nucleotide-sugar biosynthesis; UDP-N-acetyl-alpha-D-glucosamine biosynthesis; UDP-N-acetyl-alpha-D-glucosamine from N-acetyl-alpha-D-glucosamine 1-phosphate: step 1/1. The protein operates within bacterial outer membrane biogenesis; LPS lipid A biosynthesis. Functionally, catalyzes the last two sequential reactions in the de novo biosynthetic pathway for UDP-N-acetylglucosamine (UDP-GlcNAc). The C-terminal domain catalyzes the transfer of acetyl group from acetyl coenzyme A to glucosamine-1-phosphate (GlcN-1-P) to produce N-acetylglucosamine-1-phosphate (GlcNAc-1-P), which is converted into UDP-GlcNAc by the transfer of uridine 5-monophosphate (from uridine 5-triphosphate), a reaction catalyzed by the N-terminal domain. The chain is Bifunctional protein GlmU from Staphylococcus epidermidis (strain ATCC 35984 / DSM 28319 / BCRC 17069 / CCUG 31568 / BM 3577 / RP62A).